We begin with the raw amino-acid sequence, 316 residues long: Pantothenate kinase (316 aa).

95–102 (GSVAVGKS) contacts ATP.

It belongs to the prokaryotic pantothenate kinase family.

It is found in the cytoplasm. The catalysed reaction is (R)-pantothenate + ATP = (R)-4'-phosphopantothenate + ADP + H(+). It participates in cofactor biosynthesis; coenzyme A biosynthesis; CoA from (R)-pantothenate: step 1/5. The chain is Pantothenate kinase from Shewanella sediminis (strain HAW-EB3).